An 897-amino-acid polypeptide reads, in one-letter code: High molecular weight rhoptry protein 3 (897 aa).

The first 24 residues, 1 to 24 (MRSKHLVTLFIITFLSFSTVKVWG), serve as a signal peptide directing secretion. 5 disulfide bridges follow: Cys157–Cys231, Cys244–Cys253, Cys262–Cys276, Cys421–Cys620, and Cys475–Cys536. A helical membrane pass occupies residues 597–615 (FVLYFISIISVLYINEYYY). 2 disordered regions span residues 788-845 (KEQS…SNLK) and 859-897 (QLDK…ENEL). Over residues 792-801 (KSTSAASTSD) the composition is skewed to polar residues. A compositionally biased stretch (low complexity) spans 802-817 (ELSGSEGPSTESTSTG). Ser804 carries the phosphoserine modification. Over residues 820 to 832 (GEDKTTDNTYKEM) the composition is skewed to basic and acidic residues. Basic residues predominate over residues 865–876 (PKKKKSKRKKKR). Basic and acidic residues predominate over residues 877–889 (DSSSDRILLEESK).

Component of the RhopH complex, composed of CLAG3.1/CLAG3.2, RhopH2 and RhopH3 with a 1:1:1 subunit stoichiometry. Interacts with CLAG3.1/CLAG3.2. Interacts with CDPK1; the interaction promotes RhopH3 phosphorylation in merozoites. Post-translationally, proteolytically cleaved near C-terminus.

It is found in the host cell membrane. The protein localises to the parasitophorous vacuole membrane. It localises to the cytoplasmic vesicle. Its subcellular location is the secretory vesicle. The protein resides in the rhoptry. Its function is as follows. Participates in the formation of new permeability pathways in Plasmodium-infected erythrocytes enabling the uptake of nutrients from the blood plasma. Required for maintaining invasion capacity of merozoites. Required for the trophozoite to schizont developmental transition of the intracellular parasite. The chain is High molecular weight rhoptry protein 3 from Plasmodium falciparum.